Reading from the N-terminus, the 619-residue chain is ATP-dependent zinc metalloprotease FtsH (619 aa).

Residues M1–K5 lie on the Cytoplasmic side of the membrane. Residues G6–A26 traverse the membrane as a helical segment. Topologically, residues T27 to W110 are extracellular. The chain crosses the membrane as a helical span at residues V111 to I131. Residues Q132–G619 are Cytoplasmic-facing. G204–T211 is a binding site for ATP. H426 is a binding site for Zn(2+). E427 is an active-site residue. Zn(2+) contacts are provided by H430 and D502.

In the central section; belongs to the AAA ATPase family. The protein in the C-terminal section; belongs to the peptidase M41 family. As to quaternary structure, homohexamer. The cofactor is Zn(2+).

Its subcellular location is the cell membrane. In terms of biological role, acts as a processive, ATP-dependent zinc metallopeptidase for both cytoplasmic and membrane proteins. Plays a role in the quality control of integral membrane proteins. The sequence is that of ATP-dependent zinc metalloprotease FtsH from Ruminiclostridium cellulolyticum (strain ATCC 35319 / DSM 5812 / JCM 6584 / H10) (Clostridium cellulolyticum).